The following is a 254-amino-acid chain: Mediator of RNA polymerase II transcription subunit 4 (254 aa).

A coiled-coil region spans residues arginine 72–glutamate 114. The interval isoleucine 215–aspartate 254 is disordered. Low complexity predominate over residues serine 243–aspartate 254.

The protein belongs to the Mediator complex subunit 4 family. As to quaternary structure, component of the Mediator complex.

The protein resides in the nucleus. In terms of biological role, component of the Mediator complex, a coactivator involved in the regulated transcription of nearly all RNA polymerase II-dependent genes. Mediator functions as a bridge to convey information from gene-specific regulatory proteins to the basal RNA polymerase II transcription machinery. Mediator is recruited to promoters by direct interactions with regulatory proteins and serves as a scaffold for the assembly of a functional preinitiation complex with RNA polymerase II and the general transcription factors. The sequence is that of Mediator of RNA polymerase II transcription subunit 4 (med4) from Danio rerio (Zebrafish).